We begin with the raw amino-acid sequence, 236 residues long: Small ribosomal subunit protein uS3 (236 aa).

The KH type-2 domain occupies 39 to 107 (VRQFLTKELK…PAQINISEVR (69 aa)).

It belongs to the universal ribosomal protein uS3 family. Part of the 30S ribosomal subunit. Forms a tight complex with proteins S10 and S14.

Functionally, binds the lower part of the 30S subunit head. Binds mRNA in the 70S ribosome, positioning it for translation. In Aeromonas salmonicida (strain A449), this protein is Small ribosomal subunit protein uS3.